Consider the following 798-residue polypeptide: Glycogen phosphorylase (798 aa).

Lys646 bears the N6-(pyridoxal phosphate)lysine mark.

Belongs to the glycogen phosphorylase family. It depends on pyridoxal 5'-phosphate as a cofactor.

It catalyses the reaction [(1-&gt;4)-alpha-D-glucosyl](n) + phosphate = [(1-&gt;4)-alpha-D-glucosyl](n-1) + alpha-D-glucose 1-phosphate. Its function is as follows. Phosphorylase is an important allosteric enzyme in carbohydrate metabolism. Enzymes from different sources differ in their regulatory mechanisms and in their natural substrates. However, all known phosphorylases share catalytic and structural properties. The sequence is that of Glycogen phosphorylase (glgP) from Bacillus subtilis (strain 168).